A 518-amino-acid chain; its full sequence is Beta-secretase 2 (518 aa).

Residues 1 to 20 form the signal peptide; that stretch reads MGALARALLLPLLAQWLLRA. Positions 21 to 62 are excised as a propeptide; the sequence is APELAPAPFTLPLRVAAATNRVVAPTPGPGTPAERHADGLAL. Topologically, residues 21–473 are extracellular; that stretch reads APELAPAPFT…SEPILWIVSY (453 aa). The 338-residue stretch at 92 to 429 folds into the Peptidase A1 domain; that stretch reads YYLEMLIGTP…DRAQKRVGFA (338 aa). Aspartate 110 is a catalytic residue. Residue asparagine 170 is glycosylated (N-linked (GlcNAc...) asparagine). 3 disulfide bridges follow: cysteine 233–cysteine 433, cysteine 292–cysteine 457, and cysteine 344–cysteine 393. Aspartate 303 is an active-site residue. Asparagine 366 is a glycosylation site (N-linked (GlcNAc...) asparagine). Residues 474 to 494 form a helical membrane-spanning segment; the sequence is ALMSVCGAILLVLIVLLLLPF. Topologically, residues 495 to 518 are cytoplasmic; the sequence is RCQRRPRDPEVVNDESSLVRHRWK.

Belongs to the peptidase A1 family. As to quaternary structure, monomer. Interacts with RTN3 and RTN4. Post-translationally, undergoes autoproteolytic cleavage. In terms of processing, glycosylated. In terms of tissue distribution, brain. Present in neurons within the hippocampus, frontal cortex and temporal cortex (at protein level). Expressed at low levels in most peripheral tissues and at higher levels in colon, kidney, pancreas, placenta, prostate, stomach and trachea. Expressed at low levels in the brain. Found in spinal cord, medulla oblongata, substantia nigra and locus coruleus. Expressed in the ductal epithelium of both normal and malignant prostate.

It localises to the cell membrane. The protein resides in the golgi apparatus. Its subcellular location is the endoplasmic reticulum. The protein localises to the endosome. It is found in the melanosome. It catalyses the reaction Broad endopeptidase specificity. Cleaves Glu-Val-Asn-Leu-|-Asp-Ala-Glu-Phe in the Swedish variant of Alzheimer's amyloid precursor protein.. In terms of biological role, responsible for the proteolytic processing of the amyloid precursor protein (APP). Cleaves APP, between residues 690 and 691, leading to the generation and extracellular release of beta-cleaved soluble APP, and a corresponding cell-associated C-terminal fragment which is later released by gamma-secretase. It has also been shown that it can cleave APP between residues 671 and 672. Involved in the proteolytic shedding of PMEL at early stages of melanosome biogenesis. Cleaves PMEL within the M-beta fragment to release the amyloidogenic PMEL luminal fragment containing M-alpha and a small portion of M-beta N-terminus. This is a prerequisite step for subsequent processing and assembly of PMEL fibrils into amyloid sheets. Responsible also for the proteolytic processing of CLTRN in pancreatic beta cells. This chain is Beta-secretase 2 (BACE2), found in Homo sapiens (Human).